Here is an 89-residue protein sequence, read N- to C-terminus: Small ribosomal subunit protein uS15 (89 aa).

Belongs to the universal ribosomal protein uS15 family. As to quaternary structure, part of the 30S ribosomal subunit. Forms a bridge to the 50S subunit in the 70S ribosome, contacting the 23S rRNA.

Its function is as follows. One of the primary rRNA binding proteins, it binds directly to 16S rRNA where it helps nucleate assembly of the platform of the 30S subunit by binding and bridging several RNA helices of the 16S rRNA. Functionally, forms an intersubunit bridge (bridge B4) with the 23S rRNA of the 50S subunit in the ribosome. The chain is Small ribosomal subunit protein uS15 from Geobacillus stearothermophilus (Bacillus stearothermophilus).